A 432-amino-acid polypeptide reads, in one-letter code: MMQNIHFIGIGGIGISALARFLREKGFKISGSDLKESKITKELEKEGVKVSIPHHKDNILNKDLVIYSAAIKEENPEFKYAKELGIKCLSRKEALPLILEDKRVFAVAGAHGKSTTSSILASLLDDASVIIGAILKEFGSNMIYKESQNLVFEADESDSSFLNSNPYLAIVTNAEAEHLDHYGNEVSKLHHAYTQFLDVAKIRVINAEDEFLKNYKNESIKLYPSKDIKNCTMCIENFKPFTSFELKDLGEFKVFGMGYHLALDASLAILAALNFLDIETIRTRLKNYQGIKKRFDILHADENLVLIDDYGHHPTEIKATLSAAQEYVKLGGYKKITAIFEPHRYTRLATNLKEFAKAFEGVDELVILPVYAAGEEPIELDLKAVFPKALFVEDIKREGKFLVASKGQVFEEGLIIGFGAGDISNKLRQKNE.

Position 109–115 (109–115) interacts with ATP; that stretch reads GAHGKST.

The protein belongs to the MurCDEF family.

It is found in the cytoplasm. The enzyme catalyses UDP-N-acetyl-alpha-D-muramate + L-alanine + ATP = UDP-N-acetyl-alpha-D-muramoyl-L-alanine + ADP + phosphate + H(+). Its pathway is cell wall biogenesis; peptidoglycan biosynthesis. In terms of biological role, cell wall formation. The protein is UDP-N-acetylmuramate--L-alanine ligase of Campylobacter jejuni subsp. jejuni serotype O:2 (strain ATCC 700819 / NCTC 11168).